We begin with the raw amino-acid sequence, 496 residues long: L-arabinose isomerase (496 aa).

4 residues coordinate Mn(2+): Glu-305, Glu-330, His-347, and His-446.

Belongs to the arabinose isomerase family. Requires Mn(2+) as cofactor.

It carries out the reaction beta-L-arabinopyranose = L-ribulose. Its pathway is carbohydrate degradation; L-arabinose degradation via L-ribulose; D-xylulose 5-phosphate from L-arabinose (bacterial route): step 1/3. Functionally, catalyzes the conversion of L-arabinose to L-ribulose. This chain is L-arabinose isomerase, found in Bacillus subtilis (strain 168).